Here is a 106-residue protein sequence, read N- to C-terminus: UPF0145 protein Csac_0771 (106 aa).

Belongs to the UPF0145 family.

In Caldicellulosiruptor saccharolyticus (strain ATCC 43494 / DSM 8903 / Tp8T 6331), this protein is UPF0145 protein Csac_0771.